The following is an 80-amino-acid chain: Acyl carrier protein (80 aa).

One can recognise a Carrier domain in the interval 4–79 (EAILEKVRSI…DAVKYIEDKQ (76 aa)). An O-(pantetheine 4'-phosphoryl)serine modification is found at S39.

It belongs to the acyl carrier protein (ACP) family. 4'-phosphopantetheine is transferred from CoA to a specific serine of apo-ACP by AcpS. This modification is essential for activity because fatty acids are bound in thioester linkage to the sulfhydryl of the prosthetic group.

It is found in the cytoplasm. It participates in lipid metabolism; fatty acid biosynthesis. In terms of biological role, carrier of the growing fatty acid chain in fatty acid biosynthesis. The chain is Acyl carrier protein from Synechococcus sp. (strain CC9902).